The chain runs to 403 residues: Esterase LipC (403 aa).

Residues Ser237, Asp334, and His367 contribute to the active site.

This sequence belongs to the 'GDXG' lipolytic enzyme family.

Its subcellular location is the cell surface. It is found in the secreted. The protein localises to the cell wall. It localises to the capsule. The catalysed reaction is a fatty acid ester + H2O = an aliphatic alcohol + a fatty acid + H(+). It carries out the reaction a butanoate ester + H2O = an aliphatic alcohol + butanoate + H(+). The enzyme catalyses a hexanoate ester + H2O = an aliphatic alcohol + hexanoate + H(+). It catalyses the reaction an acetyl ester + H2O = an aliphatic alcohol + acetate + H(+). The catalysed reaction is an octanoate ester + H2O = an aliphatic alcohol + octanoate + H(+). It carries out the reaction decanoate ester + H2O = decanoate + an aliphatic alcohol + H(+). Its function is as follows. Esterase that can hydrolyze short-chain esters with the carbon chain containing 2 to 10 carbon atoms. Does not have lipase activity. Is highly immunogenic and elicits strong humoral immune responses in both HIV-negative (HIV-) and HIV-positive (HIV+) tuberculosis (TB) patients. Also elicits pro-inflammatory cytokine and chemokine responses from macrophages and pulmonary epithelial cells. May participate in the progression of active tuberculosis both by contributing to the utilization of lipid substrates for bacterial growth and replication, and by modulating immune responses. The chain is Esterase LipC from Mycobacterium tuberculosis (strain ATCC 25618 / H37Rv).